Consider the following 475-residue polypeptide: Aspartyl/glutamyl-tRNA(Asn/Gln) amidotransferase subunit B (475 aa).

It belongs to the GatB/GatE family. GatB subfamily. Heterotrimer of A, B and C subunits.

It carries out the reaction L-glutamyl-tRNA(Gln) + L-glutamine + ATP + H2O = L-glutaminyl-tRNA(Gln) + L-glutamate + ADP + phosphate + H(+). The catalysed reaction is L-aspartyl-tRNA(Asn) + L-glutamine + ATP + H2O = L-asparaginyl-tRNA(Asn) + L-glutamate + ADP + phosphate + 2 H(+). Its function is as follows. Allows the formation of correctly charged Asn-tRNA(Asn) or Gln-tRNA(Gln) through the transamidation of misacylated Asp-tRNA(Asn) or Glu-tRNA(Gln) in organisms which lack either or both of asparaginyl-tRNA or glutaminyl-tRNA synthetases. The reaction takes place in the presence of glutamine and ATP through an activated phospho-Asp-tRNA(Asn) or phospho-Glu-tRNA(Gln). This Helicobacter pylori (strain HPAG1) protein is Aspartyl/glutamyl-tRNA(Asn/Gln) amidotransferase subunit B.